A 255-amino-acid chain; its full sequence is tRNA pseudouridine synthase A (255 aa).

Aspartate 43 serves as the catalytic Nucleophile. Residue tyrosine 94 coordinates substrate.

This sequence belongs to the tRNA pseudouridine synthase TruA family.

It carries out the reaction uridine(38/39/40) in tRNA = pseudouridine(38/39/40) in tRNA. Its function is as follows. Formation of pseudouridine at positions 38, 39 and 40 in the anticodon stem and loop of transfer RNAs. The chain is tRNA pseudouridine synthase A from Pyrobaculum islandicum (strain DSM 4184 / JCM 9189 / GEO3).